The primary structure comprises 490 residues: Katanin p60 ATPase-containing subunit A-like 1 (490 aa).

Residue Met1 is modified to N-acetylmethionine. The interval 95-184 (DPAVWPPPVP…DGEMPKFDGA (90 aa)) is disordered. A compositionally biased stretch (basic and acidic residues) spans 116-127 (PNREVRPLRKEM). Low complexity predominate over residues 128–139 (AGVGARGPVGRA). Over residues 143–169 (SKSEKPSTSRDKDCRARGRDDKGRKNM) the composition is skewed to basic and acidic residues. Ser174 carries the post-translational modification Phosphoserine. 248 to 255 (GPPGTGKT) is a binding site for ATP.

This sequence belongs to the AAA ATPase family. Katanin p60 subunit A1 subfamily. A-like 1 sub-subfamily. In terms of assembly, interacts with KATNB1 and KATNBL1.

It localises to the cytoplasm. The protein resides in the cytoskeleton. The protein localises to the spindle pole. Its subcellular location is the spindle. It catalyses the reaction n ATP + n H2O + a microtubule = n ADP + n phosphate + (n+1) alpha/beta tubulin heterodimers.. Functionally, regulates microtubule dynamics in Sertoli cells, a process that is essential for spermiogenesis and male fertility. Severs microtubules in an ATP-dependent manner, promoting rapid reorganization of cellular microtubule arrays. Has microtubule-severing activity in vitro. In Papio anubis (Olive baboon), this protein is Katanin p60 ATPase-containing subunit A-like 1.